Here is a 29-residue protein sequence, read N- to C-terminus: Galanin (29 aa).

Alanine 29 is modified (alanine amide).

It belongs to the galanin family.

The protein resides in the secreted. In terms of biological role, contracts smooth muscle of the gastrointestinal and genitourinary tract, regulates growth hormone release, modulates insulin release, and may be involved in the control of adrenal secretion. This Ovis aries (Sheep) protein is Galanin (GAL).